Here is a 483-residue protein sequence, read N- to C-terminus: Zinc metalloproteinase/disintegrin (483 aa).

The N-terminal stretch at 1–20 is a signal peptide; it reads MIQVLLVTICLAVFPYQGSS. A propeptide spanning residues 21 to 190 is cleaved from the precursor; that stretch reads IILESGNVND…KASQLYLTPE (170 aa). Residues 197–395 form the Peptidase M12B domain; sequence RYIELAIVVD…RNPQCILNAP (199 aa). Ca(2+) is bound at residue glutamate 200. The N-linked (GlcNAc...) asparagine glycan is linked to asparagine 263. Aspartate 284 provides a ligand contact to Ca(2+). A glycan (N-linked (GlcNAc...) asparagine) is linked at asparagine 293. 3 cysteine pairs are disulfide-bonded: cysteine 308/cysteine 390, cysteine 352/cysteine 374, and cysteine 354/cysteine 357. Histidine 333 provides a ligand contact to Zn(2+). The active site involves glutamate 334. Positions 337 and 343 each coordinate Zn(2+). The Ca(2+) site is built by cysteine 390 and asparagine 393. A propeptide spanning residues 396-413 is cleaved from the precursor; that stretch reads LRTDTVSTPVSGNEFLEA. Positions 403-483 constitute a Disintegrin domain; sequence TPVSGNEFLE…SNDCPRWNDL (81 aa). Intrachain disulfides connect cysteine 417–cysteine 432, cysteine 419–cysteine 427, cysteine 426–cysteine 449, cysteine 440–cysteine 446, cysteine 445–cysteine 470, and cysteine 458–cysteine 477. The Cell attachment site motif lies at 462 to 464; the sequence is RGD.

Belongs to the venom metalloproteinase (M12B) family. P-II subfamily. P-IIa sub-subfamily. As to quaternary structure, monomeric (disintegrin). The cofactor is Zn(2+). As to expression, expressed by the venom gland.

The protein localises to the secreted. Impairs hemostasis in the envenomed animal. Its function is as follows. Inhibits platelet aggregation induced by ADP, thrombin, platelet-activating factor and collagen. Acts by inhibiting fibrinogen interaction with platelet receptors GPIIb/GPIIIa (ITGA2B/ITGB3). The polypeptide is Zinc metalloproteinase/disintegrin (Protobothrops flavoviridis (Habu)).